The chain runs to 206 residues: RNA pyrophosphohydrolase (206 aa).

The Nudix hydrolase domain maps to 6-150 (GYRPNVGIVI…KRDVYRKVMK (145 aa)). Residues 38 to 59 (GGINEGENIETAMYRELYEEVG) carry the Nudix box motif. Positions 162 to 191 (KPETVEKPRVERTEKRDFQKRDNQKREFRK) are enriched in basic and acidic residues. The interval 162–206 (KPETVEKPRVERTEKRDFQKRDNQKREFRKSARMWNNSHQKGKAQ) is disordered.

The protein belongs to the Nudix hydrolase family. RppH subfamily. A divalent metal cation serves as cofactor.

Accelerates the degradation of transcripts by removing pyrophosphate from the 5'-end of triphosphorylated RNA, leading to a more labile monophosphorylated state that can stimulate subsequent ribonuclease cleavage. The polypeptide is RNA pyrophosphohydrolase (Actinobacillus pleuropneumoniae serotype 7 (strain AP76)).